The following is a 353-amino-acid chain: Glutamine synthetase nodule isozyme (353 aa).

Positions 19 to 99 constitute a GS beta-grasp domain; that stretch reads IIAEYIWVGG…VMCDTYTPAG (81 aa). The GS catalytic domain maps to 106-353; it reads KRHAAAKIFS…TSMIAETTLL (248 aa).

The protein belongs to the glutamine synthetase family. Homooctamer.

It localises to the cytoplasm. It catalyses the reaction L-glutamate + NH4(+) + ATP = L-glutamine + ADP + phosphate + H(+). This Lupinus luteus (European yellow lupine) protein is Glutamine synthetase nodule isozyme.